Here is a 330-residue protein sequence, read N- to C-terminus: Beta-ketoacyl-[acyl-carrier-protein] synthase III (330 aa).

Active-site residues include C114 and H257. The interval 258–262 is ACP-binding; the sequence is QANLR. N287 is an active-site residue.

This sequence belongs to the thiolase-like superfamily. FabH family. Homodimer.

It is found in the cytoplasm. The catalysed reaction is malonyl-[ACP] + acetyl-CoA + H(+) = 3-oxobutanoyl-[ACP] + CO2 + CoA. It functions in the pathway lipid metabolism; fatty acid biosynthesis. In terms of biological role, catalyzes the condensation reaction of fatty acid synthesis by the addition to an acyl acceptor of two carbons from malonyl-ACP. Catalyzes the first condensation reaction which initiates fatty acid synthesis and may therefore play a role in governing the total rate of fatty acid production. Possesses both acetoacetyl-ACP synthase and acetyl transacylase activities. Its substrate specificity determines the biosynthesis of branched-chain and/or straight-chain of fatty acids. The polypeptide is Beta-ketoacyl-[acyl-carrier-protein] synthase III (Oleidesulfovibrio alaskensis (strain ATCC BAA-1058 / DSM 17464 / G20) (Desulfovibrio alaskensis)).